Consider the following 618-residue polypeptide: Grainyhead-like protein 1 homolog (618 aa).

A transcription activation region spans residues 1 to 91 (MTQEYDNKRP…EVEHPEPDHS (91 aa)). A compositionally biased stretch (basic and acidic residues) spans 74-92 (RRSSTAKPEVEHPEPDHSK). Residues 74 to 94 (RRSSTAKPEVEHPEPDHSKRN) are disordered. Thr-208 is subject to Phosphothreonine. In terms of domain architecture, Grh/CP2 DB spans 248–474 (SGNNFEYTLE…DLDTQPVLFI (227 aa)). Interaction with DNA stretches follow at residues 380–389 (TDFSSQKGVK) and 427–430 (RKIR).

Belongs to the grh/CP2 family. Grainyhead subfamily. In terms of assembly, binds DNA as homodimer. Homodimer, also forms heterodimers with GRHL2 or GRHL3. In terms of processing, methylation at Arg-9 and Lys-116 may be involved in regulating transcriptional activation. Isoform 1 is highly expressed in brain, pancreas, tonsil, placenta and kidney. Isoform 2 is highly expressed in brain and liver. Expressed at very low levels in non-steroidogenic cells.

It is found in the nucleus. Transcription factor involved in epithelial development. Binds directly to the consensus DNA sequence 5'-AACCGGTT-3'. Important regulator of DSG1 in the context of hair anchorage and epidermal differentiation, participates in the maintenance of the skin barrier. There is no genetic interaction with GRHL3, nor functional cooperativity due to diverse target gene selectivity during epithelia development. May play a role in regulating glucose homeostasis and insulin signaling. In terms of biological role, functions as a transcription activator. Its function is as follows. May function as a repressor in tissues where both isoform 1 and isoform 2 are expressed. The chain is Grainyhead-like protein 1 homolog from Homo sapiens (Human).